A 140-amino-acid polypeptide reads, in one-letter code: Nucleoside triphosphatase NudI (140 aa).

Residues 1–140 form the Nudix hydrolase domain; that stretch reads MRHRTIVCPL…RVTLSLKGLL (140 aa). A Nudix box motif is present at residues 38–58; that stretch reads GVEPGERIEEALRREIREELG.

The protein belongs to the Nudix hydrolase family. NudI subfamily. In terms of assembly, monomer. It depends on Mg(2+) as a cofactor.

The enzyme catalyses a ribonucleoside 5'-triphosphate + H2O = a ribonucleoside 5'-phosphate + diphosphate + H(+). It carries out the reaction a 2'-deoxyribonucleoside 5'-triphosphate + H2O = a 2'-deoxyribonucleoside 5'-phosphate + diphosphate + H(+). The catalysed reaction is dUTP + H2O = dUMP + diphosphate + H(+). It catalyses the reaction dTTP + H2O = dTMP + diphosphate + H(+). The enzyme catalyses dCTP + H2O = dCMP + diphosphate + H(+). In terms of biological role, catalyzes the hydrolysis of nucleoside triphosphates, with a preference for pyrimidine deoxynucleoside triphosphates (dUTP, dTTP and dCTP). In Klebsiella pneumoniae subsp. pneumoniae (strain ATCC 700721 / MGH 78578), this protein is Nucleoside triphosphatase NudI.